Reading from the N-terminus, the 238-residue chain is Ribonuclease M (238 aa).

5 disulfides stabilise this stretch: Cys-5-Cys-22, Cys-13-Cys-58, Cys-21-Cys-126, Cys-66-Cys-118, and Cys-191-Cys-225. Residue His-51 is part of the active site. The N-linked (GlcNAc...) asparagine glycan is linked to Asn-74. Residues Glu-111 and His-115 contribute to the active site.

This sequence belongs to the RNase T2 family.

It carries out the reaction a ribonucleotidyl-ribonucleotide-RNA + H2O = a 3'-end 3'-phospho-ribonucleotide-RNA + a 5'-end dephospho-ribonucleoside-RNA + H(+). Its function is as follows. This is a base non-specific and adenylic acid preferential ribonuclease. This is Ribonuclease M from Aspergillus phoenicis (Aspergillus saitoi).